Reading from the N-terminus, the 283-residue chain is Ribonuclease P protein subunit p38 (283 aa).

The residue at position 2 (A2) is an N-acetylalanine. A phosphoserine mark is found at S12, S226, and S235.

Belongs to the eukaryotic ribosomal protein eL8 family. In terms of assembly, component of nuclear RNase P and RNase MRP ribonucleoproteins. RNase P consists of a catalytic RNA moiety and about 10 protein subunits; POP1, POP4, POP5, POP7, RPP14, RPP21, RPP25, RPP30, RPP38 and RPP40. Within the RNase P complex, POP1, POP7 and RPP25 form the 'finger' subcomplex, POP5, RPP14, RPP40 and homodimeric RPP30 form the 'palm' subcomplex, and RPP21, POP4 and RPP38 form the 'wrist' subcomplex. All subunits of the RNase P complex interact with the catalytic RNA. Several subunits of RNase P are also part of the RNase MRP complex. RNase MRP consists of a catalytic RNA moiety and about 8 protein subunits; POP1, POP7, RPP25, RPP30, RPP38, RPP40 and possibly also POP4 and POP5.

It is found in the nucleus. The protein localises to the nucleolus. In terms of biological role, component of ribonuclease P, a ribonucleoprotein complex that generates mature tRNA molecules by cleaving their 5'-ends. Also a component of the MRP ribonuclease complex, which cleaves pre-rRNA sequences. The chain is Ribonuclease P protein subunit p38 (RPP38) from Homo sapiens (Human).